Here is a 305-residue protein sequence, read N- to C-terminus: GMP synthase [glutamine-hydrolyzing] subunit B (305 aa).

A GMPS ATP-PPase domain is found at 2–184 (VNIEKFIDQA…LGLPAEIQHR (183 aa)). 29–35 (SGGVDSS) lines the ATP pocket.

Heterodimer composed of a glutamine amidotransferase subunit (A) and a GMP-binding subunit (B).

The catalysed reaction is XMP + L-glutamine + ATP + H2O = GMP + L-glutamate + AMP + diphosphate + 2 H(+). Its pathway is purine metabolism; GMP biosynthesis; GMP from XMP (L-Gln route): step 1/1. Its function is as follows. Catalyzes the synthesis of GMP from XMP. This Methanoculleus marisnigri (strain ATCC 35101 / DSM 1498 / JR1) protein is GMP synthase [glutamine-hydrolyzing] subunit B.